A 391-amino-acid polypeptide reads, in one-letter code: MAFATLVGVGGLSPALFSPSRPLSCSSSTSVSAPFILRAGGGGDARRHGLRRLVTPLRGSACRGESTNSRVLQCANEANVVTEDDIVNDGIDDETASDAEMDEDAEANGDESSGTDEDASVSWIEQQPLPYPSDALEPYISKETVEQHWGVHQNIHVERLNGMIGGSEWEGMSLGQMMLSSFNEGREAPHPPFFHAAQIWNHDFYWRSMQPGGGGKPPERLLKFINRDFGSYDGMIRQFMDAASTQFGSGWVWLCYKTSKLPHVKSRSPIPSDNYGRLVISKSPNAINPLVWGHSPLLAIDLWEHAYYLDYEDRRSDYVSTFLEKLVSWETVESRLKKAVQRAVERDEYVSTKHIRKQLLARAKSQIRAMPQQVNGDAREQTSGQEKSLGV.

A chloroplast-targeting transit peptide spans 1–73 (MAFATLVGVG…GESTNSRVLQ (73 aa)). Residues 87–119 (VNDGIDDETASDAEMDEDAEANGDESSGTDEDA) show a composition bias toward acidic residues. The segment at 87 to 120 (VNDGIDDETASDAEMDEDAEANGDESSGTDEDAS) is disordered. Fe cation contacts are provided by His148, His202, Asp301, and His305. A disordered region spans residues 370-391 (MPQQVNGDAREQTSGQEKSLGV). The span at 381–391 (QTSGQEKSLGV) shows a compositional bias: polar residues.

Belongs to the iron/manganese superoxide dismutase family. In terms of assembly, homodimer. Fe cation is required as a cofactor.

It is found in the plastid. The protein localises to the chloroplast. The enzyme catalyses 2 superoxide + 2 H(+) = H2O2 + O2. In terms of biological role, destroys superoxide anion radicals which are normally produced within the cells and which are toxic to biological systems. The protein is Superoxide dismutase [Fe] 1, chloroplastic of Oryza sativa subsp. japonica (Rice).